The sequence spans 285 residues: MWAQLSYTRPESQKTDLTSLFSTDQEQNPLNDYQYQINIRELEEYYNKTILNEDNIQETSSEISSAVSFSPPKNTNAIQPGLLYDPQLMNPFLPSAHLNSTAPTTFKKKLEVQINPDYVPKSSQLPLTSQNLQQLSQQKPKNDASFSSEKESSAQPKVKSQVQETPKQLYKTELCESFTLKGSCPYGSKCQFAHGLGELKVKKSCKNFRTKPCVNWEKLGYCPYGRRCCFKHGDDNDIAVYVKAGTYCNVSSTSKQSDEKRSNGRGSAKKKNLNVKVKALQRMTW.

A required for mRNA decay activity region spans residues 37-55 (INIRELEEYYNKTILNEDN). The interval 132 to 164 (LQQLSQQKPKNDASFSSEKESSAQPKVKSQVQE) is disordered. Over residues 153 to 164 (SAQPKVKSQVQE) the composition is skewed to polar residues. 2 consecutive C3H1-type zinc fingers follow at residues 169–197 (LYKT…HGLG) and 207–235 (NFRT…HGDD). The segment at 252–271 (STSKQSDEKRSNGRGSAKKK) is disordered.

As to quaternary structure, interacts with DHH1.

The protein localises to the nucleus. The protein resides in the cytoplasm. It is found in the P-body. Functionally, binds to specific AU-rich elements (ARE) in the 3'-untranslated region of target mRNAs and promotes their degradation. In response to iron deficiency, promotes the decay of many mRNAs encoding proteins involved in iron-dependent pathways. Recruits the DHH1 helicase to the SDH4 mRNA and promotes SDH4 mRNA decay. Also destabilizes target mRNA by modulating 3'-end processing, creating extended transcripts that are prone for degradation. The sequence is that of mRNA decay factor CTH2 (TIS11) from Saccharomyces cerevisiae (strain ATCC 204508 / S288c) (Baker's yeast).